The sequence spans 600 residues: Glutamine--fructose-6-phosphate aminotransferase [isomerizing] (600 aa).

The active-site Nucleophile; for GATase activity is the Cys2. The Glutamine amidotransferase type-2 domain occupies 2–217 (CGIVGFIGEQ…DKEIVIVTKE (216 aa)). 2 SIS domains span residues 283–422 (IRNA…AKGE) and 452–590 (LAKQ…VDKP). Residue Lys595 is the For Fru-6P isomerization activity of the active site.

Homodimer.

It is found in the cytoplasm. The enzyme catalyses D-fructose 6-phosphate + L-glutamine = D-glucosamine 6-phosphate + L-glutamate. Functionally, catalyzes the first step in hexosamine metabolism, converting fructose-6P into glucosamine-6P using glutamine as a nitrogen source. This Bacillus cereus (strain ATCC 10987 / NRS 248) protein is Glutamine--fructose-6-phosphate aminotransferase [isomerizing].